The sequence spans 1124 residues: EGF and laminin G domain-containing protein (1124 aa).

At 1–1055 the chain is on the extracellular side; it reads RTFVKKYSAS…KLQAEDDDKT (1055 aa). 2 Laminin G-like domains span residues 8–203 and 210–369; these read SASR…NQKC and PFTF…WSGC. Intrachain disulfides connect Cys-167-Cys-203, Cys-342-Cys-369, Cys-375-Cys-386, Cys-380-Cys-395, Cys-397-Cys-412, Cys-761-Cys-788, Cys-792-Cys-803, Cys-797-Cys-812, and Cys-814-Cys-824. An EGF-like 1 domain is found at 371 to 413; the sequence is ITDFCIFSPCLHGGECTQTGKTFSCGCSGTGYDKGPNSLSVCQ. The Laminin G-like 3 domain maps to 621–788; that stretch reads NTATFVNEDG…GEAVFVKSGC (168 aa). An EGF-like 2 domain is found at 789-825; sequence GAACENNSCKNHAKCLDNYNVYFCDCSKTPYYGYFCH. A disordered region spans residues 1011 to 1047; it reads RATCGPEPKVPEIPTPRPVGQRADVSTPQGITTNPKL. Polar residues predominate over residues 1034 to 1046; sequence DVSTPQGITTNPK. The helical transmembrane segment at 1056-1076 threads the bilayer; that stretch reads AIIVVVVLILVLLLVVLILVI. The Cytoplasmic segment spans residues 1077 to 1124; that stretch reads YWYWARHKGEYHTHEDDEELKATDPYIEPAAPRKLKGEEPEKKKEWYI. Residues 1090–1124 are disordered; it reads HEDDEELKATDPYIEPAAPRKLKGEEPEKKKEWYI. Positions 1111 to 1124 are enriched in basic and acidic residues; the sequence is LKGEEPEKKKEWYI.

As to expression, component of the acid-insoluble organic matrix of the aragonitic skeleton (at protein level).

The protein localises to the membrane. This is EGF and laminin G domain-containing protein from Acropora millepora (Staghorn coral).